A 303-amino-acid polypeptide reads, in one-letter code: Heme A synthase (303 aa).

The Cytoplasmic segment spans residues 1-8 (MFGKKNLK). Residues 9–29 (WLGVVATLMMTFVQLGGALVT) traverse the membrane as a helical segment. Residues 30-67 (KTGSADGCGSSWPLCHGALIPEFFPIDTIIELSHRAVS) lie on the Extracellular side of the membrane. Cysteine 37 and cysteine 44 are disulfide-bonded. Glutamate 60 is an active-site residue. Histidine 63 contacts heme o. Residues 68 to 88 (ALSLLMVLWLVITAWKHIGYI) traverse the membrane as a helical segment. The Cytoplasmic segment spans residues 89–93 (KEIKP). A helical transmembrane segment spans residues 94–114 (LSIISVGFLLLQALIGAAAVI). Topologically, residues 115-125 (WQQNDYVLALH) are extracellular. A heme o-binding site is contributed by histidine 125. The helical transmembrane segment at 126–146 (FGISLISFSSVFLITLIIFSI) threads the bilayer. Residues 147–163 (DQKYEADELYIKKPLRR) lie on the Cytoplasmic side of the membrane. A helical transmembrane segment spans residues 164-184 (LTWLMAIIIYCGVYTGALVRH). Topologically, residues 185-215 (ADASLAYGGWPLPFHDLVPHSEQDWVQLTHR) are extracellular. A heme b-binding site is contributed by histidine 214. The chain crosses the membrane as a helical span at residues 216–236 (IMAFIVFTIIMITYIHAVKNY). The Cytoplasmic segment spans residues 237 to 244 (PNNRTVHY). The chain crosses the membrane as a helical span at residues 245-265 (GYTAAFILVILQVITGALSIM). Residues 266–270 (TNVNL) are Extracellular-facing. The helical transmembrane segment at 271–291 (LIALFHALFITYLFGMTTYFI) threads the bilayer. Histidine 276 provides a ligand contact to heme b. At 292–303 (MLMLRSVRSDKQ) the chain is on the cytoplasmic side.

Belongs to the COX15/CtaA family. Type 1 subfamily. As to quaternary structure, interacts with CtaB. The cofactor is heme b.

It localises to the cell membrane. It catalyses the reaction Fe(II)-heme o + 2 A + H2O = Fe(II)-heme a + 2 AH2. It functions in the pathway porphyrin-containing compound metabolism; heme A biosynthesis; heme A from heme O: step 1/1. In terms of biological role, catalyzes the conversion of heme O to heme A by two successive hydroxylations of the methyl group at C8. The first hydroxylation forms heme I, the second hydroxylation results in an unstable dihydroxymethyl group, which spontaneously dehydrates, resulting in the formyl group of heme A. The chain is Heme A synthase from Staphylococcus aureus (strain MSSA476).